The primary structure comprises 284 residues: D-tagatose-1,6-bisphosphate aldolase subunit GatY (284 aa).

Asp82 (proton donor) is an active-site residue. His83 and His180 together coordinate Zn(2+). A dihydroxyacetone phosphate-binding site is contributed by Gly181. His208 lines the Zn(2+) pocket. Residues 209–211 (GAS) and 230–233 (NVAT) each bind dihydroxyacetone phosphate.

This sequence belongs to the class II fructose-bisphosphate aldolase family. TagBP aldolase GatY subfamily. As to quaternary structure, forms a complex with GatZ. Zn(2+) is required as a cofactor.

It carries out the reaction D-tagatofuranose 1,6-bisphosphate = D-glyceraldehyde 3-phosphate + dihydroxyacetone phosphate. Its pathway is carbohydrate metabolism; D-tagatose 6-phosphate degradation; D-glyceraldehyde 3-phosphate and glycerone phosphate from D-tagatose 6-phosphate: step 2/2. Catalytic subunit of the tagatose-1,6-bisphosphate aldolase GatYZ, which catalyzes the reversible aldol condensation of dihydroxyacetone phosphate (DHAP or glycerone-phosphate) with glyceraldehyde 3-phosphate (G3P) to produce tagatose 1,6-bisphosphate (TBP). Requires GatZ subunit for full activity and stability. Is involved in the catabolism of galactitol. This is D-tagatose-1,6-bisphosphate aldolase subunit GatY from Shigella flexneri.